Consider the following 1080-residue polypeptide: DNA-directed RNA polymerase subunit beta (1080 aa).

This sequence belongs to the RNA polymerase beta chain family. In plastids the minimal PEP RNA polymerase catalytic core is composed of four subunits: alpha, beta, beta', and beta''. When a (nuclear-encoded) sigma factor is associated with the core the holoenzyme is formed, which can initiate transcription.

It localises to the plastid. The protein localises to the chloroplast. It carries out the reaction RNA(n) + a ribonucleoside 5'-triphosphate = RNA(n+1) + diphosphate. Its function is as follows. DNA-dependent RNA polymerase catalyzes the transcription of DNA into RNA using the four ribonucleoside triphosphates as substrates. The chain is DNA-directed RNA polymerase subunit beta from Mesostigma viride (Green alga).